We begin with the raw amino-acid sequence, 811 residues long: Probable inorganic carbon transporter subunit DabA (811 aa).

4 residues coordinate Zn(2+): cysteine 336, aspartate 338, histidine 498, and cysteine 513.

The protein belongs to the inorganic carbon transporter (TC 9.A.2) DabA family. Forms a complex with DabB. Requires Zn(2+) as cofactor.

The protein resides in the cell inner membrane. In terms of biological role, part of an energy-coupled inorganic carbon pump. This chain is Probable inorganic carbon transporter subunit DabA, found in Rhodospirillum centenum (strain ATCC 51521 / SW).